Consider the following 333-residue polypeptide: Tetraacyldisaccharide 4'-kinase (333 aa).

57–64 serves as a coordination point for ATP; sequence IVGGAGKT.

It belongs to the LpxK family.

It carries out the reaction a lipid A disaccharide + ATP = a lipid IVA + ADP + H(+). It participates in glycolipid biosynthesis; lipid IV(A) biosynthesis; lipid IV(A) from (3R)-3-hydroxytetradecanoyl-[acyl-carrier-protein] and UDP-N-acetyl-alpha-D-glucosamine: step 6/6. Its function is as follows. Transfers the gamma-phosphate of ATP to the 4'-position of a tetraacyldisaccharide 1-phosphate intermediate (termed DS-1-P) to form tetraacyldisaccharide 1,4'-bis-phosphate (lipid IVA). This Dechloromonas aromatica (strain RCB) protein is Tetraacyldisaccharide 4'-kinase.